Reading from the N-terminus, the 292-residue chain is Protein/nucleic acid deglycase HchA (292 aa).

Positions 1-12 (MSQDVNELSKQP) are enriched in polar residues. The disordered stretch occupies residues 1–23 (MSQDVNELSKQPTPDKAEDNAFF). Residue cysteine 190 is the Nucleophile of the active site.

Belongs to the peptidase C56 family. HchA subfamily.

It is found in the cytoplasm. The enzyme catalyses N(omega)-(1-hydroxy-2-oxopropyl)-L-arginyl-[protein] + H2O = lactate + L-arginyl-[protein] + H(+). It catalyses the reaction N(6)-(1-hydroxy-2-oxopropyl)-L-lysyl-[protein] + H2O = lactate + L-lysyl-[protein] + H(+). It carries out the reaction S-(1-hydroxy-2-oxopropyl)-L-cysteinyl-[protein] + H2O = lactate + L-cysteinyl-[protein] + H(+). The catalysed reaction is N(omega)-(1-hydroxy-2-oxoethyl)-L-arginyl-[protein] + H2O = L-arginyl-[protein] + glycolate + H(+). The enzyme catalyses N(6)-(1-hydroxy-2-oxoethyl)-L-lysyl-[protein] + H2O = glycolate + L-lysyl-[protein] + H(+). It catalyses the reaction S-(1-hydroxy-2-oxoethyl)-L-cysteinyl-[protein] + H2O = glycolate + L-cysteinyl-[protein] + H(+). It carries out the reaction N(2)-(1-hydroxy-2-oxopropyl)-dGTP + H2O = lactate + dGTP + H(+). The catalysed reaction is N(2)-(1-hydroxy-2-oxopropyl)-GTP + H2O = lactate + GTP + H(+). The enzyme catalyses N(2)-(1-hydroxy-2-oxopropyl)-GDP + H2O = lactate + GDP + H(+). It catalyses the reaction N(2)-(1-hydroxy-2-oxopropyl)-GMP + H2O = lactate + GMP + H(+). It carries out the reaction N(2)-(1-hydroxy-2-oxoethyl)-dGTP + H2O = dGTP + glycolate + H(+). The catalysed reaction is N(2)-(1-hydroxy-2-oxoethyl)-GTP + H2O = glycolate + GTP + H(+). The enzyme catalyses N(2)-(1-hydroxy-2-oxoethyl)-GDP + H2O = glycolate + GDP + H(+). It catalyses the reaction N(2)-(1-hydroxy-2-oxoethyl)-GMP + H2O = glycolate + GMP + H(+). It carries out the reaction an N(2)-(1-hydroxy-2-oxopropyl)-guanosine in RNA + H2O = a guanosine in RNA + lactate + H(+). The catalysed reaction is an N(2)-(1-hydroxy-2-oxopropyl)-2'-deoxyguanosine in DNA + H2O = a 2'-deoxyguanosine in DNA + lactate + H(+). The enzyme catalyses an N(2)-(1-hydroxy-2-oxoethyl)-guanosine in RNA + H2O = a guanosine in RNA + glycolate + H(+). It catalyses the reaction an N(2)-(1-hydroxy-2-oxoethyl)-2'-deoxyguanosine in DNA + H2O = a 2'-deoxyguanosine in DNA + glycolate + H(+). Its function is as follows. Protein and nucleotide deglycase that catalyzes the deglycation of the Maillard adducts formed between amino groups of proteins or nucleotides and reactive carbonyl groups of glyoxals. Thus, functions as a protein deglycase that repairs methylglyoxal- and glyoxal-glycated proteins, and releases repaired proteins and lactate or glycolate, respectively. Deglycates cysteine, arginine and lysine residues in proteins, and thus reactivates these proteins by reversing glycation by glyoxals. Acts on early glycation intermediates (hemithioacetals and aminocarbinols), preventing the formation of Schiff bases and advanced glycation endproducts (AGE). Also functions as a nucleotide deglycase able to repair glycated guanine in the free nucleotide pool (GTP, GDP, GMP, dGTP) and in DNA and RNA. Is thus involved in a major nucleotide repair system named guanine glycation repair (GG repair), dedicated to reversing methylglyoxal and glyoxal damage via nucleotide sanitization and direct nucleic acid repair. Plays an important role in protecting cells from carbonyl stress. This Staphylococcus aureus (strain Newman) protein is Protein/nucleic acid deglycase HchA.